A 371-amino-acid chain; its full sequence is 4-hydroxy-3-methylbut-2-en-1-yl diphosphate synthase (flavodoxin) (371 aa).

Positions 269, 272, 304, and 311 each coordinate [4Fe-4S] cluster.

The protein belongs to the IspG family. It depends on [4Fe-4S] cluster as a cofactor.

It catalyses the reaction (2E)-4-hydroxy-3-methylbut-2-enyl diphosphate + oxidized [flavodoxin] + H2O + 2 H(+) = 2-C-methyl-D-erythritol 2,4-cyclic diphosphate + reduced [flavodoxin]. It participates in isoprenoid biosynthesis; isopentenyl diphosphate biosynthesis via DXP pathway; isopentenyl diphosphate from 1-deoxy-D-xylulose 5-phosphate: step 5/6. Functionally, converts 2C-methyl-D-erythritol 2,4-cyclodiphosphate (ME-2,4cPP) into 1-hydroxy-2-methyl-2-(E)-butenyl 4-diphosphate. This chain is 4-hydroxy-3-methylbut-2-en-1-yl diphosphate synthase (flavodoxin), found in Acinetobacter baumannii (strain AB307-0294).